The chain runs to 121 residues: Large ribosomal subunit protein bL19 (121 aa).

It belongs to the bacterial ribosomal protein bL19 family.

This protein is located at the 30S-50S ribosomal subunit interface and may play a role in the structure and function of the aminoacyl-tRNA binding site. The protein is Large ribosomal subunit protein bL19 of Symbiobacterium thermophilum (strain DSM 24528 / JCM 14929 / IAM 14863 / T).